The chain runs to 384 residues: Actin-related protein 2/3 complex subunit 1 (384 aa).

5 WD repeats span residues 61 to 99 (DHDKTITAVDISIHGRIVTCSQDRNAYVWEPLSDGTYKP), 105 to 146 (RINR…WVSK), 151 to 190 (PIKSTINCLSWHANGVLLAAGGTDGFMRVFSGFIKGLDSK), 212 to 251 (YQGSYIHDVEWRSQMERIAYVAHDGTLNVVDYQSPVQSVN), and 349 to 383 (AHENAIVELRPFAESNGQITQVSSCGLDGKIVIYT).

Belongs to the WD repeat ARPC1 family. Component of the Arp2/3 complex composed of ARP2, ARP3, ARC40/p41-ARC, ARC35/p34-ARC, ARC18/p21-ARC, ARC19/p20-ARC and ARC16/p16-ARC.

The protein resides in the cytoplasm. The protein localises to the cytoskeleton. It localises to the actin patch. Its function is as follows. Functions as a component of the Arp2/3 complex which is involved in regulation of actin polymerization and together with an activating nucleation-promoting factor (NPF) mediates the formation of branched actin networks. This is Actin-related protein 2/3 complex subunit 1 (ARC40) from Saccharomyces cerevisiae (strain ATCC 204508 / S288c) (Baker's yeast).